The primary structure comprises 128 residues: Fluoride-specific ion channel FluC (128 aa).

Transmembrane regions (helical) follow at residues 5-25 (LFISCGAILGASLRWAIGLLF), 34-54 (FGALIANLLGCLIIGVLLGLF), 67-87 (FLITGFLGSLTTFSSFSSEVV), and 99-119 (FCVLMMHLFGCLAMTVLGIWI). Gly-74 and Thr-77 together coordinate Na(+).

Belongs to the fluoride channel Fluc/FEX (TC 1.A.43) family.

The protein resides in the cell inner membrane. The enzyme catalyses fluoride(in) = fluoride(out). Its activity is regulated as follows. Na(+) is not transported, but it plays an essential structural role and its presence is essential for fluoride channel function. Fluoride-specific ion channel. Important for reducing fluoride concentration in the cell, thus reducing its toxicity. The protein is Fluoride-specific ion channel FluC of Haemophilus influenzae (strain PittEE).